Reading from the N-terminus, the 294-residue chain is Tetraspanin-15 (294 aa).

Residues 1–23 (MPRGDSEQVRYCARFSYLWLKFS) are Cytoplasmic-facing. Residues 24–44 (LIIYSTVFWLIGGLVLSVGIY) traverse the membrane as a helical segment. The Extracellular segment spans residues 45 to 62 (AEAERQKYKTLESAFLAP). The chain crosses the membrane as a helical span at residues 63–83 (AIILILLGVVMFIVSFIGVLA). Over 84–94 (SLRDNLCLLQS) the chain is Cytoplasmic. Residues 95 to 115 (FMYILGICLVMELIGGIVALI) traverse the membrane as a helical segment. Residues 116–235 (FRNQTIDFLN…WFMDNYTIMA (120 aa)) are Extracellular-facing. N118 carries an N-linked (GlcNAc...) asparagine glycan. 4 disulfides stabilise this stretch: C154/C219, C155/C185, C171/C179, and C186/C198. N189 and N230 each carry an N-linked (GlcNAc...) asparagine glycan. A helical transmembrane segment spans residues 236 to 256 (GLLLGILLPQFLGVLLTLLYI). Over 257–294 (TRVEDIILEHSVTDGLLGPGAKSRTDTAGTGCCLCYPD) the chain is Cytoplasmic.

The protein belongs to the tetraspanin (TM4SF) family. In terms of assembly, interacts with ADAM10; the interaction influences ADAM10 substrate specificity, endocytosis and turnover. Post-translationally, palmitoylated.

It is found in the cell membrane. Its subcellular location is the late endosome membrane. Functionally, part of TspanC8 subgroup, composed of 6 members that interact with the transmembrane metalloprotease ADAM10. This interaction is required for ADAM10 exit from the endoplasmic reticulum and for enzymatic maturation and trafficking to the cell surface as well as substrate specificity. Different TspanC8/ADAM10 complexes have distinct substrates. Promotes ADAM10-mediated cleavage of CDH2. Negatively regulates ligand-induced Notch activity probably by regulating ADAM10 activity. The chain is Tetraspanin-15 (Tspan15) from Mus musculus (Mouse).